A 267-amino-acid polypeptide reads, in one-letter code: MASSEETPRSLAGKVALVTGAGRGIGKGIALELAKRGASLVVNYNSAEKPAQEVVDEISKTGSRAVAIKADITKVPEVSRLFQEALRHFGHLDIVVSNSGTEVFKPEEEVTEEDYDRVFNLNTRAQFFIAQHAYVHLRDGGRIVLMSSVAANMSGIPNHALYAGSKAAVEGFTRSFAVDAGHRKITVNAIAPGGVKTDMYDANAWHYVPNGKPGMPMEEIDKGLAAFCPLGRVAVPQDIGRVVAFLAHPDSEWVNGQVILLTGGSVT.

NADP(+) is bound by residues isoleucine 25, asparagine 45, aspartate 71, and asparagine 98. Residues serine 147 and serine 148 each act as proton donor in the active site. NADP(+) is bound by residues tyrosine 162, lysine 166, valine 195, and threonine 197. Tyrosine 162 (proton acceptor) is an active-site residue. The active-site Lowers pKa of active site Tyr is the lysine 166.

Belongs to the short-chain dehydrogenases/reductases (SDR) family.

In terms of biological role, hydroxynaphthalene reductase-like protein; part of the Pks2 gene cluster that mediates the formation of infectious structures (appressoria), enabling these fungi to kill insects faster. The product of the Pks2 gene cluster is different from the one of Pks1 and has still not been identified. This chain is Hydroxynaphthalene reductase-like protein Arp2, found in Metarhizium brunneum (strain ARSEF 3297).